The following is a 392-amino-acid chain: Putative RNA-binding protein Luc7-like 2 (392 aa).

Position 18 is a phosphoserine (Ser-18). Residues 102–177 (EVAKKRLAET…EAEEVYRNSM (76 aa)) adopt a coiled-coil conformation. The span at 235–257 (KQEKRNQERLKRREEREREEREK) shows a compositional bias: basic and acidic residues. Residues 235–392 (KQEKRNQERL…SSEEREAGEI (158 aa)) are disordered. Residues 258–321 (LRRSRSHSKN…RSRSHQRSRH (64 aa)) are compositionally biased toward basic residues. 5-hydroxylysine; by JMJD6 is present on residues Lys-266 and Lys-269. Composition is skewed to basic and acidic residues over residues 337 to 364 (KERF…DRDR) and 377 to 392 (RSED…AGEI).

Belongs to the Luc7 family. Interacts with SCNM1.

The protein localises to the nucleus speckle. It localises to the nucleus. It is found in the nucleoplasm. Its function is as follows. May bind to RNA via its Arg/Ser-rich domain. The sequence is that of Putative RNA-binding protein Luc7-like 2 (LUC7L2) from Homo sapiens (Human).